The following is a 337-amino-acid chain: Deoxyhypusine hydroxylase (337 aa).

HEAT-like PBS-type repeat units follow at residues 73–99 (LKHELAYCLGQTGNTAAVKPLRQVLSD) and 106–132 (CRHEAAEALGALGWADNLDILREYRDR). Fe cation contacts are provided by H75, E76, H108, and E109. The span at 156-165 (AERQKEKLRP) shows a compositional bias: basic and acidic residues. The segment at 156 to 183 (AERQKEKLRPSDFASIDPAPPMPESDKE) is disordered. HEAT-like PBS-type repeat units lie at residues 202–235 (SRYRAMFALRDLASPPDLPTATPAVLALAKGLSD), 240–266 (FRHEIAFVFGQLSHPASIPALTEALSN), and 273–300 (VRHEAAEALGSLGEKDGVEDTLRKFLHD). The Fe cation site is built by H242, E243, H275, and E276.

It belongs to the deoxyhypusine hydroxylase family. The cofactor is Fe(2+).

Its subcellular location is the cytoplasm. It is found in the nucleus. The catalysed reaction is [eIF5A protein]-deoxyhypusine + AH2 + O2 = [eIF5A protein]-hypusine + A + H2O. Its pathway is protein modification; eIF5A hypusination. Catalyzes the hydroxylation of the N(6)-(4-aminobutyl)-L-lysine intermediate to form hypusine, an essential post-translational modification only found in mature eIF-5A factor. This Gibberella zeae (strain ATCC MYA-4620 / CBS 123657 / FGSC 9075 / NRRL 31084 / PH-1) (Wheat head blight fungus) protein is Deoxyhypusine hydroxylase.